The sequence spans 336 residues: Probable GTPase MT1543 (336 aa).

GTP-binding positions include 67-75 (GVPGVGKST), aspartate 209, and 245-247 (SAV).

This sequence belongs to the SIMIBI class G3E GTPase family. ArgK/MeaB subfamily. In terms of assembly, homodimer.

Its function is as follows. Probable GTPase. May also bind and hydrolyze ATP. May function as chaperone. This chain is Probable GTPase MT1543, found in Mycobacterium tuberculosis (strain CDC 1551 / Oshkosh).